The primary structure comprises 418 residues: Serpin A9 (418 aa).

Residues 1 to 25 (MGSSSFYRVLLLVGFCAPIFCMLSS) form the signal peptide. N-linked (GlcNAc...) asparagine glycosylation is found at Asn103, Asn213, and Asn224.

This sequence belongs to the serpin family.

It is found in the secreted. This chain is Serpin A9 (Serpina9), found in Mus musculus (Mouse).